The chain runs to 122 residues: Large ribosomal subunit protein uL14 (122 aa).

This sequence belongs to the universal ribosomal protein uL14 family. In terms of assembly, part of the 50S ribosomal subunit. Forms a cluster with proteins L3 and L19. In the 70S ribosome, L14 and L19 interact and together make contacts with the 16S rRNA in bridges B5 and B8.

Its function is as follows. Binds to 23S rRNA. Forms part of two intersubunit bridges in the 70S ribosome. In Pseudothermotoga lettingae (strain ATCC BAA-301 / DSM 14385 / NBRC 107922 / TMO) (Thermotoga lettingae), this protein is Large ribosomal subunit protein uL14.